The sequence spans 968 residues: RNA polymerase-associated protein RapA (968 aa).

The 171-residue stretch at 164–334 (DVGRRHAPRV…FARLRLLDPN (171 aa)) folds into the Helicase ATP-binding domain. 177–184 (DEVGLGKT) provides a ligand contact to ATP. A DEAH box motif is present at residues 280–283 (DEAH). The region spanning 490-662 (RVEWLMGYLT…YLASPDQTEG (173 aa)) is the Helicase C-terminal domain.

The protein belongs to the SNF2/RAD54 helicase family. RapA subfamily. Interacts with the RNAP. Has a higher affinity for the core RNAP than for the holoenzyme. Its ATPase activity is stimulated by binding to RNAP.

Its function is as follows. Transcription regulator that activates transcription by stimulating RNA polymerase (RNAP) recycling in case of stress conditions such as supercoiled DNA or high salt concentrations. Probably acts by releasing the RNAP, when it is trapped or immobilized on tightly supercoiled DNA. Does not activate transcription on linear DNA. Probably not involved in DNA repair. This chain is RNA polymerase-associated protein RapA, found in Escherichia coli O1:K1 / APEC.